The following is a 216-amino-acid chain: Trimethylamine corrinoid protein 1 (216 aa).

A B12-binding N-terminal domain is found at 1-92 (MANKEEIIAK…EMEKRKSQTK (92 aa)). The region spanning 94–216 (LGTIVIGTIE…VVSKVKAALL (123 aa)) is the B12-binding domain. H107 contacts methylcob(III)alamin.

The protein belongs to the methylamine corrinoid protein family. In terms of assembly, can form a complex with MttB.

The protein operates within one-carbon metabolism; methanogenesis from trimethylamine. Functionally, acts probably as a methyl group carrier between MttB and either MtbA or MtaA. The chain is Trimethylamine corrinoid protein 1 (mttC1) from Methanosarcina mazei (strain ATCC BAA-159 / DSM 3647 / Goe1 / Go1 / JCM 11833 / OCM 88) (Methanosarcina frisia).